The following is a 481-amino-acid chain: Proline--tRNA ligase (481 aa).

This sequence belongs to the class-II aminoacyl-tRNA synthetase family. ProS type 3 subfamily. In terms of assembly, homodimer.

Its subcellular location is the cytoplasm. The catalysed reaction is tRNA(Pro) + L-proline + ATP = L-prolyl-tRNA(Pro) + AMP + diphosphate. Its function is as follows. Catalyzes the attachment of proline to tRNA(Pro) in a two-step reaction: proline is first activated by ATP to form Pro-AMP and then transferred to the acceptor end of tRNA(Pro). The sequence is that of Proline--tRNA ligase from Saccharolobus islandicus (strain M.16.27) (Sulfolobus islandicus).